Consider the following 800-residue polypeptide: U4/U6.U5 tri-snRNP-associated protein 1 (800 aa).

The disordered stretch occupies residues 1–120; sequence MGSSKKHRGE…SSGDASSLSI (120 aa). Residues 32 to 42 show a composition bias toward basic residues; sequence HREHKKHKHRS. A compositionally biased stretch (basic and acidic residues) spans 58 to 101; the sequence is ERGGERGSGRRGAEAEARSSTHGRERSQAEPSERRVKREKRDDG. Residues 104–119 are compositionally biased toward low complexity; the sequence is AAASSKTSSGDASSLS. Residues Lys-125 and Lys-133 each participate in a glycyl lysine isopeptide (Lys-Gly) (interchain with G-Cter in SUMO2) cross-link. Lys-141 participates in a covalent cross-link: Glycyl lysine isopeptide (Lys-Gly) (interchain with G-Cter in SUMO1); alternate. A Glycyl lysine isopeptide (Lys-Gly) (interchain with G-Cter in SUMO2); alternate cross-link involves residue Lys-141. Glycyl lysine isopeptide (Lys-Gly) (interchain with G-Cter in SUMO2) cross-links involve residues Lys-147 and Lys-188. A coiled-coil region spans residues 157 to 231; it reads NPMALRQREE…KLLEEMDQEF (75 aa). A Phosphothreonine modification is found at Thr-189. Residue Lys-277 forms a Glycyl lysine isopeptide (Lys-Gly) (interchain with G-Cter in SUMO2) linkage. Residues 311-330 are disordered; that stretch reads PDYLPYAEDESVDDLAQQKP. Position 321 is a phosphoserine (Ser-321). Glycyl lysine isopeptide (Lys-Gly) (interchain with G-Cter in SUMO2) cross-links involve residues Lys-329 and Lys-336. Ser-348 carries the phosphoserine modification. At Thr-392 the chain carries Phosphothreonine. Residues Lys-400 and Lys-414 each participate in a glycyl lysine isopeptide (Lys-Gly) (interchain with G-Cter in SUMO2) cross-link. Residues 419 to 497 form a disordered region; sequence RADDLLPLGD…QVLEEDEAEL (79 aa). The residue at position 430 (Thr-430) is a Phosphothreonine. Phosphoserine is present on residues Ser-448, Ser-474, Ser-486, and Ser-521. Residues 490-533 adopt a coiled-coil conformation; it reads LEEDEAELELQKQLEKGRRLRQLQQLQQLRDSGEKVVEIVKKLE. Lys-548 participates in a covalent cross-link: Glycyl lysine isopeptide (Lys-Gly) (interchain with G-Cter in SUMO2). Residues 571–604 are disordered; it reads LAGNREEQEELMDFERDEERSANGGSESDGEENI. Phosphoserine occurs at positions 591, 596, 598, and 621. Residues Lys-648, Lys-657, and Lys-684 each participate in a glycyl lysine isopeptide (Lys-Gly) (interchain with G-Cter in SUMO2) cross-link. At Thr-695 the chain carries Phosphothreonine. Glycyl lysine isopeptide (Lys-Gly) (interchain with G-Cter in SUMO2) cross-links involve residues Lys-699, Lys-709, Lys-723, Lys-749, and Lys-758. Ser-761 is subject to Phosphoserine. Phosphothreonine is present on Thr-764. Residues Lys-775 and Lys-780 each participate in a glycyl lysine isopeptide (Lys-Gly) (interchain with G-Cter in SUMO2) cross-link. Position 789 is a phosphoserine (Ser-789). Residue Lys-791 forms a Glycyl lysine isopeptide (Lys-Gly) (interchain with G-Cter in SUMO2) linkage.

This sequence belongs to the SNU66/SART1 family. In terms of assembly, identified in the spliceosome C complex. Component of the U4/U6-U5 tri-snRNP complex composed of the U4, U6 and U5 snRNAs and at least PRPF3, PRPF4, PRPF6, PRPF8, PRPF31, SNRNP200, TXNL4A, SNRNP40, DDX23, CD2BP2, PPIH, SNU13, EFTUD2, SART1 and USP39. Interacts with UBL5. Interacts with IVNS1ABP (via Kelch repeats). Sumoylated with SUMO2. As to expression, ubiquitously expressed.

Its subcellular location is the nucleus. Its function is as follows. Plays a role in mRNA splicing as a component of the U4/U6-U5 tri-snRNP, one of the building blocks of the spliceosome. May also bind to DNA. This chain is U4/U6.U5 tri-snRNP-associated protein 1 (SART1), found in Homo sapiens (Human).